We begin with the raw amino-acid sequence, 525 residues long: Probable alpha-galactosidase A (525 aa).

Residues methionine 1–alanine 17 form the signal peptide. Cysteine 40 and cysteine 72 are disulfide-bonded. 3 N-linked (GlcNAc...) asparagine glycosylation sites follow: asparagine 43, asparagine 81, and asparagine 117. Residues cysteine 120 and cysteine 150 are joined by a disulfide bond. Aspartate 148 serves as the catalytic Nucleophile. An N-linked (GlcNAc...) asparagine glycan is attached at asparagine 197. Aspartate 206 acts as the Proton donor in catalysis. In terms of domain architecture, Ricin B-type lectin spans proline 402 to alanine 525. 2 disulfides stabilise this stretch: cysteine 422–cysteine 434 and cysteine 459–cysteine 472.

The protein belongs to the glycosyl hydrolase 27 family.

Its subcellular location is the secreted. It carries out the reaction Hydrolysis of terminal, non-reducing alpha-D-galactose residues in alpha-D-galactosides, including galactose oligosaccharides, galactomannans and galactolipids.. Its function is as follows. Hydrolyzes a variety of simple alpha-D-galactoside as well as more complex molecules such as oligosaccharides and polysaccharides. In Aspergillus clavatus (strain ATCC 1007 / CBS 513.65 / DSM 816 / NCTC 3887 / NRRL 1 / QM 1276 / 107), this protein is Probable alpha-galactosidase A (aglA).